A 411-amino-acid chain; its full sequence is Glycogen synthase kinase-3 homolog MsK-3 (411 aa).

Positions 74 to 358 (YMAERVVGHG…ALEALVHPFY (285 aa)) constitute a Protein kinase domain. ATP-binding positions include 80–88 (VGHGSFGVV) and lysine 103. Residue aspartate 199 is the Proton acceptor of the active site. At tyrosine 234 the chain carries Phosphotyrosine.

The protein belongs to the protein kinase superfamily. CMGC Ser/Thr protein kinase family. GSK-3 subfamily. As to expression, absent in leaves and petioles, very low levels are seen in the stems and roots while a moderate expression is seen in the nodes.

The catalysed reaction is L-seryl-[protein] + ATP = O-phospho-L-seryl-[protein] + ADP + H(+). The enzyme catalyses L-threonyl-[protein] + ATP = O-phospho-L-threonyl-[protein] + ADP + H(+). The protein is Glycogen synthase kinase-3 homolog MsK-3 (MSK-3) of Medicago sativa (Alfalfa).